Reading from the N-terminus, the 299-residue chain is tRNA dimethylallyltransferase (299 aa).

10 to 17 (GATATGKS) lines the ATP pocket. 12 to 17 (TATGKS) contributes to the substrate binding site. Residues 35–38 (DSRQ) form an interaction with substrate tRNA region.

This sequence belongs to the IPP transferase family. In terms of assembly, monomer. Mg(2+) is required as a cofactor.

The enzyme catalyses adenosine(37) in tRNA + dimethylallyl diphosphate = N(6)-dimethylallyladenosine(37) in tRNA + diphosphate. Functionally, catalyzes the transfer of a dimethylallyl group onto the adenine at position 37 in tRNAs that read codons beginning with uridine, leading to the formation of N6-(dimethylallyl)adenosine (i(6)A). The sequence is that of tRNA dimethylallyltransferase from Rippkaea orientalis (strain PCC 8801 / RF-1) (Cyanothece sp. (strain PCC 8801)).